A 299-amino-acid polypeptide reads, in one-letter code: B-box zinc finger protein 22 (299 aa).

8 residues coordinate Zn(2+): Cys5, Cys8, Cys28, His33, Cys57, Cys60, Cys80, and His85. The B box-type 1; atypical zinc-finger motif lies at 5-47 (CNVCEAAEATVLCCADEAALCWACDEKIHAANKLAGKHQRVPL). The B box-type 2; atypical zinc finger occupies 57–99 (CDICQEASGFFFCLQDRALLCRKCDVAIHTVNPHVSAHQRFLL). Disordered regions lie at residues 143-181 (FDHHHHQQQQEQQEGVIPGTKVNDQTSTKLPLVSSGSTT) and 206-299 (ENNG…RRRF). Composition is skewed to polar residues over residues 164 to 181 (VNDQTSTKLPLVSSGSTT), 251 to 260 (QIQSPPTASG), and 277 to 290 (ITSSTPYTGSSPNQ).

In terms of assembly, interacts with HY5. Post-translationally, ubiquitinated by COP1 in vitro. COP1-mediated degradation of BBX22 by the proteasome occurs in the dark and is important for a precise skotomorphogenesis process and optimization of seedling growth under short days conditions.

It is found in the nucleus. Acts as a positive regulator of seedling photomorphogenesis and light-regulated inhibition of hypocotyl elongation, independently and in concert with HY5 and BBX21. Acts as a positive regulator of de-etiolation and influences chloroplast biogenesis and function through regulation of genes encoding chloroplast proteins. Acts downstream of COP1 and plays an important role in early and long-term adjustment of the shade avoidance syndrome (SAS) responses in natural environments. Regulates the expression of genes responsive to light hormone signals which may contribute to optimal seedling development. The chain is B-box zinc finger protein 22 from Arabidopsis thaliana (Mouse-ear cress).